A 254-amino-acid chain; its full sequence is Ribosomal RNA small subunit methyltransferase G (254 aa).

S-adenosyl-L-methionine-binding positions include glycine 84, phenylalanine 89, 136-137 (VE), and arginine 155.

Belongs to the methyltransferase superfamily. RNA methyltransferase RsmG family.

Its subcellular location is the cytoplasm. Specifically methylates the N7 position of a guanine in 16S rRNA. This is Ribosomal RNA small subunit methyltransferase G from Synechococcus sp. (strain CC9311).